Consider the following 473-residue polypeptide: Lactate utilization protein B (473 aa).

4Fe-4S ferredoxin-type domains lie at 302–332 (GSEF…GHSY) and 351–380 (YDDY…LHDL). Residues Cys311, Cys314, Cys317, Cys321, Cys364, Cys367, and Cys371 each coordinate [4Fe-4S] cluster.

Belongs to the LutB/YkgF family.

In terms of biological role, is involved in L-lactate degradation and allows cells to grow with lactate as the sole carbon source. Has probably a role as an electron transporter during oxidation of L-lactate. This chain is Lactate utilization protein B, found in Bacillus cereus (strain G9842).